The following is a 775-amino-acid chain: Hepatocyte growth factor-regulated tyrosine kinase substrate (775 aa).

Positions 15 to 143 (ATSQLLLETD…IMKVEGHVFP (129 aa)) constitute a VHS domain. The FYVE-type zinc finger occupies 160–220 (WVDAEECHRC…VCEPCYEQLN (61 aa)). 6 residues coordinate Zn(2+): cysteine 166, cysteine 169, cysteine 182, cysteine 185, cysteine 190, and cysteine 193. Residue lysine 207 is modified to N6-acetyllysine. Residues cysteine 212 and cysteine 215 each contribute to the Zn(2+) site. Tyrosine 216 is modified (phosphotyrosine). The tract at residues 223 to 319 (AEGKASSTTE…SPVNSSAPLA (97 aa)) is disordered. The tract at residues 225 to 541 (GKASSTTELP…QRLQEQEKER (317 aa)) is interaction with SNX1. The UIM domain maps to 258–277 (QEEEELQLALALSQSEAEEK). Over residues 307 to 316 (LYSSPVNSSA) the composition is skewed to polar residues. Phosphotyrosine occurs at positions 308, 329, and 334. The disordered stretch occupies residues 338–405 (KQEEARKSPT…NGESEESHEQ (68 aa)). Residues 443-541 (SINTMHPQLL…QRLQEQEKER (99 aa)) form an interaction with SNAP25 and TRAK2 region. An interaction with STAM region spans residues 452–570 (LELLNQLDER…FPLPYAQLQA (119 aa)). An interaction with NF2 region spans residues 478–775 (ARGALSALRE…GSEAQLISFD (298 aa)). Lysine 549 is subject to N6-succinyllysine. Low complexity predominate over residues 640–657 (PGAQAAPQAQAGPTTSPA). Disordered stretches follow at residues 640 to 690 (PGAQ…PQTS) and 719 to 775 (QDAS…ISFD). A compositionally biased stretch (polar residues) spans 658-690 (YSSYQPTPTPGYQSVASQAPQSLPAISQPPQTS). Over residues 744 to 761 (TGPPQQQPPVAQPAPTQG) the composition is skewed to pro residues.

As to quaternary structure, component of the ESCRT-0 complex composed of STAM or STAM2 and HGS. Part of a complex at least composed of HSG, STAM2 (or probably STAM) and EPS15. Interacts with STAM. Interacts with STAM2. Interacts with EPS15; the interaction is direct, calcium-dependent and inhibited by SNAP25. Identified in a complex with STAM and LITAF. Found in a complex with STAM and E3 ligase ITCH and DTX3L. Interacts with E3 ligase DTX3L; the interaction brings together STAM and HSG, promotes their recruitment to early endosomes and decreases STAM and HGS ubiquitination by ITCH. Interacts with NF2; the interaction is direct. Interacts with ubiquitin; the interaction is direct. Interacts with VPS37C. Interacts with SMAD1, SMAD2 and SMAD3. Interacts with TSG101; the interaction mediates the association with the ESCRT-I complex. Interacts with SNAP25; the interaction is direct and decreases with addition of increasing concentrations of free calcium. Interacts with SNX1; the interaction is direct. Component of a 550 kDa membrane complex at least composed of HGS and SNX1 but excluding EGFR. Interacts with TRAK1. Interacts with TRAK2. Component of the CART complex, at least composed of ACTN4, HGS/HRS, MYO5B and TRIM3. Interacts with ARRDC3. Identified in a complex containing at least ARRDC4, AVPR2 and HGS. Interacts (via UIM domain) with UBQLN1 (via ubiquitin-like domain). Interacts with LAPTM4B; promotes HGS ubiquitination. In terms of processing, phosphorylated on Tyr-334. This phosphorylation occurs in response to EGF. A minor site of phosphorylation on Tyr-329 is detected. Protein phosphorylation may also be triggered in response to IL-2, GM-CSF and HGF. Ubiquitinated by ITCH. In terms of tissue distribution, ubiquitous expression in adult and fetal tissues with higher expression in testis.

The protein resides in the cytoplasm. The protein localises to the early endosome membrane. It is found in the endosome. It localises to the multivesicular body membrane. Its function is as follows. Involved in intracellular signal transduction mediated by cytokines and growth factors. When associated with STAM, it suppresses DNA signaling upon stimulation by IL-2 and GM-CSF. Could be a direct effector of PI3-kinase in vesicular pathway via early endosomes and may regulate trafficking to early and late endosomes by recruiting clathrin. May concentrate ubiquitinated receptors within clathrin-coated regions. Involved in down-regulation of receptor tyrosine kinase via multivesicular body (MVBs) when complexed with STAM (ESCRT-0 complex). The ESCRT-0 complex binds ubiquitin and acts as a sorting machinery that recognizes ubiquitinated receptors and transfers them to further sequential lysosomal sorting/trafficking processes. May contribute to the efficient recruitment of SMADs to the activin receptor complex. Involved in receptor recycling via its association with the CART complex, a multiprotein complex required for efficient transferrin receptor recycling but not for EGFR degradation. The protein is Hepatocyte growth factor-regulated tyrosine kinase substrate (Hgs) of Mus musculus (Mouse).